The primary structure comprises 919 residues: MLX-interacting protein (919 aa).

The segment at 1-72 (MAADVFMCSP…AGPGREEPPR (72 aa)) is disordered. At Ala-2 the chain carries N-acetylalanine. 4 positions are modified to phosphoserine: Ser-9, Ser-27, Ser-33, and Ser-39. Acidic residues predominate over residues 27-37 (SEDDDDSDTDE). Over residues 44–56 (SGAATPARAHASA) the composition is skewed to low complexity. Residues 73 to 327 (RQQIIHSGHF…PLQPNLDFMD (255 aa)) are required for cytoplasmic localization. The transactivation domain stretch occupies residues 322–445 (NLDFMDTFEP…LLSPSPAPPP (124 aa)). 2 disordered regions span residues 542 to 562 (KPVS…PAPK) and 633 to 712 (DLGH…SDPK). Position 669 is a phosphoserine (Ser-669). Positions 670–685 (PQVTVTGPSRDCPNSG) are enriched in polar residues. Residues 686–706 (QASPCASEQSPSPQSPQNNCS) show a composition bias toward low complexity. The bHLH domain occupies 719 to 769 (NRQMKHISAEQKRRFNIKMCFDMLNSLISNNSKLTSHAITLQKTVEYITKL). The tract at residues 769-790 (LQQERGQMQEEARRLREEIEEL) is leucine-zipper. A mediates heterotypic interactions between MLXIP and MLX and is required for cytoplasmic localization region spans residues 832 to 881 (WKFWIFSIIIKPLFESFKGMVSTSSLEELHRTALSWLDQHCSLPILRPMV).

Efficient DNA binding requires dimerization with another bHLH protein. Binds DNA as a homodimer or a heterodimer with MLX. Widely expressed in adult tissues. Most abundant in skeletal muscle.

The protein localises to the cytoplasm. It localises to the nucleus. Its subcellular location is the mitochondrion outer membrane. Its function is as follows. Binds DNA as a heterodimer with MLX and activates transcription. Binds to the canonical E box sequence 5'-CACGTG-3'. Plays a role in transcriptional activation of glycolytic target genes. Involved in glucose-responsive gene regulation. The protein is MLX-interacting protein of Homo sapiens (Human).